A 224-amino-acid polypeptide reads, in one-letter code: Putative O-methyltransferase MUL_4520 (224 aa).

Over residues 1–11 (MHGTDSSSDTP) the composition is skewed to polar residues. Positions 1-20 (MHGTDSSSDTPGQPAPSRAE) are disordered. S-adenosyl-L-methionine contacts are provided by residues V51, E73, 75–76 (GT), S81, D99, and I100. Substrate is bound at residue D147. D149 provides a ligand contact to S-adenosyl-L-methionine.

Belongs to the class I-like SAM-binding methyltransferase superfamily. Cation-dependent O-methyltransferase family.

The protein is Putative O-methyltransferase MUL_4520 of Mycobacterium ulcerans (strain Agy99).